The following is a 456-amino-acid chain: Anthranilate synthase component 1 (456 aa).

L-tryptophan is bound by residues Ser31 and 244–246; that span reads SYM. Chorismate is bound at residue 279–280; sequence GT. Mg(2+) is bound at residue Glu306. Chorismate-binding positions include Tyr394, Arg414, 428-430, and Gly430; that span reads GAG. Mg(2+) is bound at residue Glu443.

It belongs to the anthranilate synthase component I family. In terms of assembly, heterotetramer consisting of two non-identical subunits: a beta subunit (TrpG) and a large alpha subunit (TrpE). It depends on Mg(2+) as a cofactor.

The catalysed reaction is chorismate + L-glutamine = anthranilate + pyruvate + L-glutamate + H(+). The protein operates within amino-acid biosynthesis; L-tryptophan biosynthesis; L-tryptophan from chorismate: step 1/5. With respect to regulation, feedback inhibited by tryptophan. Functionally, part of a heterotetrameric complex that catalyzes the two-step biosynthesis of anthranilate, an intermediate in the biosynthesis of L-tryptophan. In the first step, the glutamine-binding beta subunit (TrpG) of anthranilate synthase (AS) provides the glutamine amidotransferase activity which generates ammonia as a substrate that, along with chorismate, is used in the second step, catalyzed by the large alpha subunit of AS (TrpE) to produce anthranilate. In the absence of TrpG, TrpE can synthesize anthranilate directly from chorismate and high concentrations of ammonia. The polypeptide is Anthranilate synthase component 1 (trpE) (Lactococcus lactis subsp. lactis (strain IL1403) (Streptococcus lactis)).